A 299-amino-acid polypeptide reads, in one-letter code: Small ribosomal subunit biogenesis GTPase RsgA (299 aa).

Positions 73 to 232 (CSWLTRPQVA…VADTPGFNRP (160 aa)) constitute a CP-type G domain. GTP is bound by residues 122–125 (TKGD) and 174–182 (GPSGVGKSS). Residues cysteine 257, cysteine 262, histidine 264, and cysteine 270 each coordinate Zn(2+).

The protein belongs to the TRAFAC class YlqF/YawG GTPase family. RsgA subfamily. Monomer. Associates with 30S ribosomal subunit, binds 16S rRNA. The cofactor is Zn(2+).

The protein localises to the cytoplasm. One of several proteins that assist in the late maturation steps of the functional core of the 30S ribosomal subunit. Helps release RbfA from mature subunits. May play a role in the assembly of ribosomal proteins into the subunit. Circularly permuted GTPase that catalyzes slow GTP hydrolysis, GTPase activity is stimulated by the 30S ribosomal subunit. The polypeptide is Small ribosomal subunit biogenesis GTPase RsgA (Parasynechococcus marenigrum (strain WH8102)).